Consider the following 120-residue polypeptide: MSSKSKFVRRQRIKRRVRSVVSGTEQRPRLTVFRSLSHIYAQLIDDVNGHTLVAASSMPSKGASLLKGKKSDVSREVGKALAEKAKAKGIDAVVFDRNGYRYHGRVKALAEGAREGGLKF.

This sequence belongs to the universal ribosomal protein uL18 family. As to quaternary structure, part of the 50S ribosomal subunit; part of the 5S rRNA/L5/L18/L25 subcomplex. Contacts the 5S and 23S rRNAs.

Functionally, this is one of the proteins that bind and probably mediate the attachment of the 5S RNA into the large ribosomal subunit, where it forms part of the central protuberance. The sequence is that of Large ribosomal subunit protein uL18 from Chloroherpeton thalassium (strain ATCC 35110 / GB-78).